The sequence spans 351 residues: Uroporphyrinogen decarboxylase (351 aa).

Residues 25–29 (RQAGR), Asp-74, Tyr-151, Ser-206, and His-325 each bind substrate.

It belongs to the uroporphyrinogen decarboxylase family. In terms of assembly, homodimer.

It is found in the cytoplasm. The catalysed reaction is uroporphyrinogen III + 4 H(+) = coproporphyrinogen III + 4 CO2. It participates in porphyrin-containing compound metabolism; protoporphyrin-IX biosynthesis; coproporphyrinogen-III from 5-aminolevulinate: step 4/4. Catalyzes the decarboxylation of four acetate groups of uroporphyrinogen-III to yield coproporphyrinogen-III. The sequence is that of Uroporphyrinogen decarboxylase from Chlorobium phaeobacteroides (strain DSM 266 / SMG 266 / 2430).